A 317-amino-acid polypeptide reads, in one-letter code: N(5)-(carboxyethyl)ornithine synthase (317 aa).

3 residues coordinate pyruvate: Arg15, Lys71, and His92. Residue 172 to 177 participates in NADP(+) binding; the sequence is GSGNVS.

This sequence belongs to the AlaDH/PNT family. CEOS subfamily. As to quaternary structure, homotetramer.

The enzyme catalyses N(5)-[1(S)-1-carboxyethyl]-L-ornithine + NADP(+) + H2O = L-ornithine + pyruvate + NADPH + H(+). Catalyzes the NADPH-dependent reductive condensation between pyruvic acid and the side chain amino group of L-ornithine to form N(5)-(L-1-carboxyethyl)-L-ornithine. To a lesser extent, can also use L-lysine as substrate (yielding N(6)-(L-1-carboxyethyl)-L-lysine), and the D-isomers of the 2 basic amino acids. Can use alpha-keto acids other than pyruvate, e.g. glyoxylate. The chain is N(5)-(carboxyethyl)ornithine synthase (ceo) from Clostridium botulinum (strain Hall / ATCC 3502 / NCTC 13319 / Type A).